The following is a 392-amino-acid chain: Stilbene synthase 6 (392 aa).

Residue lysine 55–arginine 58 coordinates substrate. Cysteine 164 is an active-site residue. Substrate-binding positions include leucine 267 and glycine 305 to proline 307.

This sequence belongs to the thiolase-like superfamily. Chalcone/stilbene synthases family. In terms of assembly, homodimer.

The protein resides in the cytoplasm. The catalysed reaction is 4-coumaroyl-CoA + 3 malonyl-CoA + 3 H(+) = trans-resveratrol + 4 CO2 + 4 CoA. It participates in phytoalexin biosynthesis; 3,4',5-trihydroxystilbene biosynthesis; 3,4',5-trihydroxystilbene from trans-4-coumarate: step 2/2. Functionally, mediates resistance to pathogens which are sensitive to stilbenes. The protein is Stilbene synthase 6 (STS) of Vitis vinifera (Grape).